Consider the following 548-residue polypeptide: WAP, Kazal, immunoglobulin, Kunitz and NTR domain-containing protein 1 (548 aa).

A signal peptide spans 1–19 (MPALRPLLPLLLLLRLTSG). Residues 26–79 (LGSHPGVCPNQLSPNLWVDAQSTCERECSRDQDCAAAEKCCINVCGLHSCVAAR) enclose the WAP domain. 7 disulfide bridges follow: Cys33/Cys66, Cys49/Cys70, Cys53/Cys65, Cys59/Cys75, Cys116/Cys146, Cys120/Cys139, and Cys128/Cys157. Residues 108-159 (WDGQPVCRCRDRCEKEPSFTCASDGLTYYNRCYMDAEACLRGLHLHIVPCKH) form the Kazal-like domain. The disordered stretch occupies residues 164–184 (PPSSPGPPETTARPTPGAAPV). The Ig-like C2-type domain occupies 186–279 (PALYSSPSPQ…GLLRADFPLS (94 aa)). Disulfide bonds link Cys207–Cys263, Cys299–Cys351, Cys306–Cys334, Cys326–Cys347, Cys359–Cys409, Cys368–Cys392, Cys384–Cys405, Cys417–Cys489, Cys420–Cys491, and Cys431–Cys540. 2 BPTI/Kunitz inhibitor domains span residues 299–351 (CLPD…QQAC) and 359–409 (CVLP…EDAC). The NTR domain maps to 409–540 (CPVPRTPPCR…ILELLEKQAC (132 aa)). Asn493 carries an N-linked (GlcNAc...) asparagine glycan.

This sequence belongs to the WFIKKN family. As to expression, expressed in pancreas, kidney, liver, placenta, and lung.

It localises to the secreted. Its function is as follows. Protease-inhibitor that contains multiple distinct protease inhibitor domains. Probably has serine protease- and metalloprotease-inhibitor activity. The protein is WAP, Kazal, immunoglobulin, Kunitz and NTR domain-containing protein 1 (WFIKKN1) of Homo sapiens (Human).